Here is a 305-residue protein sequence, read N- to C-terminus: D-alanine--D-alanine ligase (305 aa).

The region spanning 107–299 is the ATP-grasp domain; that stretch reads KKMLCYHGIA…FDELVERILA (193 aa). ATP is bound at residue 134–186; sequence PDYPLVVKPAREGSTIGISIVHDEQELAAGLEEAFRHDDLVLVEQFIAGAEVT. Mg(2+)-binding residues include Asp254, Glu266, and Asn268.

This sequence belongs to the D-alanine--D-alanine ligase family. Mg(2+) is required as a cofactor. The cofactor is Mn(2+).

Its subcellular location is the cytoplasm. The enzyme catalyses 2 D-alanine + ATP = D-alanyl-D-alanine + ADP + phosphate + H(+). It participates in cell wall biogenesis; peptidoglycan biosynthesis. In terms of biological role, cell wall formation. This chain is D-alanine--D-alanine ligase, found in Syntrophotalea carbinolica (strain DSM 2380 / NBRC 103641 / GraBd1) (Pelobacter carbinolicus).